The chain runs to 427 residues: 3-phosphoshikimate 1-carboxyvinyltransferase (427 aa).

3 residues coordinate 3-phosphoshikimate: lysine 20, serine 21, and arginine 25. Lysine 20 is a phosphoenolpyruvate binding site. Phosphoenolpyruvate is bound by residues glycine 92 and arginine 120. Residues serine 166, glutamine 168, aspartate 312, and lysine 339 each coordinate 3-phosphoshikimate. Glutamine 168 contributes to the phosphoenolpyruvate binding site. The active-site Proton acceptor is the aspartate 312. Positions 343 and 385 each coordinate phosphoenolpyruvate.

It belongs to the EPSP synthase family. Monomer.

It is found in the cytoplasm. The enzyme catalyses 3-phosphoshikimate + phosphoenolpyruvate = 5-O-(1-carboxyvinyl)-3-phosphoshikimate + phosphate. It participates in metabolic intermediate biosynthesis; chorismate biosynthesis; chorismate from D-erythrose 4-phosphate and phosphoenolpyruvate: step 6/7. Functionally, catalyzes the transfer of the enolpyruvyl moiety of phosphoenolpyruvate (PEP) to the 5-hydroxyl of shikimate-3-phosphate (S3P) to produce enolpyruvyl shikimate-3-phosphate and inorganic phosphate. This is 3-phosphoshikimate 1-carboxyvinyltransferase from Streptococcus gordonii (strain Challis / ATCC 35105 / BCRC 15272 / CH1 / DL1 / V288).